We begin with the raw amino-acid sequence, 512 residues long: Probable malate:quinone oxidoreductase (512 aa).

It belongs to the MQO family. FAD serves as cofactor.

It catalyses the reaction (S)-malate + a quinone = a quinol + oxaloacetate. Its pathway is carbohydrate metabolism; tricarboxylic acid cycle; oxaloacetate from (S)-malate (quinone route): step 1/1. In Rhodococcus erythropolis (strain PR4 / NBRC 100887), this protein is Probable malate:quinone oxidoreductase.